The primary structure comprises 346 residues: Biotin synthase (346 aa).

A Radical SAM core domain is found at 38–256 (RQVQVSTLLS…IAVARIMMPT (219 aa)). Residues Cys-53, Cys-57, and Cys-60 each coordinate [4Fe-4S] cluster. [2Fe-2S] cluster-binding residues include Cys-97, Cys-128, Cys-188, and Arg-260.

Belongs to the radical SAM superfamily. Biotin synthase family. As to quaternary structure, homodimer. Requires [4Fe-4S] cluster as cofactor. [2Fe-2S] cluster is required as a cofactor.

It carries out the reaction (4R,5S)-dethiobiotin + (sulfur carrier)-SH + 2 reduced [2Fe-2S]-[ferredoxin] + 2 S-adenosyl-L-methionine = (sulfur carrier)-H + biotin + 2 5'-deoxyadenosine + 2 L-methionine + 2 oxidized [2Fe-2S]-[ferredoxin]. Its pathway is cofactor biosynthesis; biotin biosynthesis; biotin from 7,8-diaminononanoate: step 2/2. Catalyzes the conversion of dethiobiotin (DTB) to biotin by the insertion of a sulfur atom into dethiobiotin via a radical-based mechanism. This is Biotin synthase from Escherichia fergusonii (strain ATCC 35469 / DSM 13698 / CCUG 18766 / IAM 14443 / JCM 21226 / LMG 7866 / NBRC 102419 / NCTC 12128 / CDC 0568-73).